The chain runs to 273 residues: NLP effector protein 10 (273 aa).

The signal sequence occupies residues 1–21 (MKLPTFLIGFVALLVTSNGSA). N91 carries N-linked (GlcNAc...) asparagine glycosylation. Positions 129 to 139 (AIMYAWYLPRA) match the Conserved undecapeptide motif motif. Positions 149 to 155 (GHRHYWL) match the Conserved heptapeptide motif motif.

The protein belongs to the Necrosis inducing protein (NPP1) family.

It is found in the secreted. Functionally, secreted effector that acts as a pathogen-associated molecular pattern (PAMP) recognized by the plant immune system. Seems not to induce necrosis in Nicotiana benthamiana leaves but significantly improves disease resistance of Arabidopsis thaliana to Hyaloperonospora arabidopsidis and causes an inhibition of plant growth which is typically associated with enhanced immunity when over-expressed in Arabidopsis. The protein is NLP effector protein 10 of Plasmopara viticola (Downy mildew of grapevine).